A 581-amino-acid chain; its full sequence is Pyridine nucleotide-disulfide oxidoreductase domain-containing protein 2 (581 aa).

Residue 38-71 (VVIGAGHNGLVVAAYLQRLGVNTAVFERRHVIGG) coordinates FAD.

This sequence belongs to the carotenoid/retinoid oxidoreductase family. Interacts with COX5B; this interaction may contribute to localize PYROXD2 to the inner face of the inner mitochondrial membrane.

The protein localises to the mitochondrion matrix. Its function is as follows. Probable oxidoreductase that may play a role as regulator of mitochondrial function. This is Pyridine nucleotide-disulfide oxidoreductase domain-containing protein 2 from Pongo abelii (Sumatran orangutan).